We begin with the raw amino-acid sequence, 258 residues long: Hydroxyacylglutathione hydrolase (258 aa).

Residues H56, H58, D60, H61, H112, D132, and H170 each contribute to the Zn(2+) site.

The protein belongs to the metallo-beta-lactamase superfamily. Glyoxalase II family. As to quaternary structure, monomer. The cofactor is Zn(2+).

The enzyme catalyses an S-(2-hydroxyacyl)glutathione + H2O = a 2-hydroxy carboxylate + glutathione + H(+). Its pathway is secondary metabolite metabolism; methylglyoxal degradation; (R)-lactate from methylglyoxal: step 2/2. Functionally, thiolesterase that catalyzes the hydrolysis of S-D-lactoyl-glutathione to form glutathione and D-lactic acid. This Pseudomonas aeruginosa (strain ATCC 15692 / DSM 22644 / CIP 104116 / JCM 14847 / LMG 12228 / 1C / PRS 101 / PAO1) protein is Hydroxyacylglutathione hydrolase.